A 121-amino-acid polypeptide reads, in one-letter code: UPF0102 protein Strop_1320 (121 aa).

This sequence belongs to the UPF0102 family.

In Salinispora tropica (strain ATCC BAA-916 / DSM 44818 / JCM 13857 / NBRC 105044 / CNB-440), this protein is UPF0102 protein Strop_1320.